Here is a 508-residue protein sequence, read N- to C-terminus: ATP synthase subunit alpha, chloroplastic (508 aa).

ATP is bound at residue glycine 170 to threonine 177.

The protein belongs to the ATPase alpha/beta chains family. As to quaternary structure, F-type ATPases have 2 components, CF(1) - the catalytic core - and CF(0) - the membrane proton channel. CF(1) has five subunits: alpha(3), beta(3), gamma(1), delta(1), epsilon(1). CF(0) has four main subunits: a, b, b' and c.

The protein resides in the plastid. It localises to the chloroplast thylakoid membrane. It carries out the reaction ATP + H2O + 4 H(+)(in) = ADP + phosphate + 5 H(+)(out). Produces ATP from ADP in the presence of a proton gradient across the membrane. The alpha chain is a regulatory subunit. This is ATP synthase subunit alpha, chloroplastic from Helianthus annuus (Common sunflower).